A 493-amino-acid polypeptide reads, in one-letter code: 3-octaprenyl-4-hydroxybenzoate carboxy-lyase (493 aa).

Residue N172 coordinates Mn(2+). Prenylated FMN contacts are provided by residues 175–177 (IYR), 189–191 (RWL), and 194–195 (RG). Residue E238 coordinates Mn(2+). The Proton donor role is filled by D287.

It belongs to the UbiD family. In terms of assembly, homohexamer. Requires prenylated FMN as cofactor. It depends on Mn(2+) as a cofactor.

It is found in the cell membrane. It carries out the reaction a 4-hydroxy-3-(all-trans-polyprenyl)benzoate + H(+) = a 2-(all-trans-polyprenyl)phenol + CO2. It functions in the pathway cofactor biosynthesis; ubiquinone biosynthesis. Catalyzes the decarboxylation of 3-octaprenyl-4-hydroxy benzoate to 2-octaprenylphenol, an intermediate step in ubiquinone biosynthesis. The chain is 3-octaprenyl-4-hydroxybenzoate carboxy-lyase from Shewanella sp. (strain MR-4).